The chain runs to 122 residues: NADPH-dependent 7-cyano-7-deazaguanine reductase (122 aa).

The Thioimide intermediate role is filled by cysteine 34. Aspartate 41 serves as the catalytic Proton donor. Residues 56–58 (VEL) and 75–76 (HE) each bind substrate.

This sequence belongs to the GTP cyclohydrolase I family. QueF type 1 subfamily.

It localises to the cytoplasm. The catalysed reaction is 7-aminomethyl-7-carbaguanine + 2 NADP(+) = 7-cyano-7-deazaguanine + 2 NADPH + 3 H(+). The protein operates within tRNA modification; tRNA-queuosine biosynthesis. Functionally, catalyzes the NADPH-dependent reduction of 7-cyano-7-deazaguanine (preQ0) to 7-aminomethyl-7-deazaguanine (preQ1). This Anaeromyxobacter dehalogenans (strain 2CP-C) protein is NADPH-dependent 7-cyano-7-deazaguanine reductase.